An 821-amino-acid polypeptide reads, in one-letter code: uncharacterized protein (821 aa).

Disordered regions lie at residues 1–20, 55–96, 134–205, 240–263, 274–293, 360–381, 430–450, 467–497, 512–535, and 549–641; these read MGQTNSRHSLIETDEPTTSS, SENY…EAYS, SYDF…NNEH, RLHQSPSPIPNSNDNDSQTRRSSW, PEEFPNASNPEAHSNFTPLN, NVLQNSSQNGNDQISSDPESNS, TSEDHAPTMTQENQSLHNESR, EFSTDLPPTFERSNSTFSHPEPTRSDFSQAF, RNLFPTSNSGNQSTSSFSRYNQPT, and AQEP…SNQT. Composition is skewed to polar residues over residues 58 to 88 and 185 to 203; these read YADTPSRNTPNSSNGFPSETLVTSSAHCSTQ and SLPSNSNSTYTTPLQSINN. A compositionally biased stretch (polar residues) spans 279–293; the sequence is NASNPEAHSNFTPLN. Positions 437-450 are enriched in polar residues; that stretch reads TMTQENQSLHNESR. Composition is skewed to low complexity over residues 517–529 and 568–578; these read TSNSGNQSTSSFS and SSLLDSSNSNS. Over residues 579–622 the composition is skewed to polar residues; it reads QRPFSTVPSESNVFSRNASGNFSMSQTHQPTTDNTSSFSTQPGR. The RING-type; atypical zinc-finger motif lies at 766–809; it reads CLICLETYTNGDICRKLQACKHFFHQACIDQWLTTGNNSCPLCR.

This is an uncharacterized protein from Schizosaccharomyces pombe (strain 972 / ATCC 24843) (Fission yeast).